Reading from the N-terminus, the 635-residue chain is Threonine--tRNA ligase (635 aa).

In terms of domain architecture, TGS spans 1–61 (MINISFPDGS…DNDCKFRILT (61 aa)). Positions 242-533 (DHRKLGRELD…LIEEYAGRFP (292 aa)) are catalytic. Zn(2+) is bound by residues Cys-333, His-384, and His-510.

Belongs to the class-II aminoacyl-tRNA synthetase family. Homodimer. Zn(2+) serves as cofactor.

The protein resides in the cytoplasm. It catalyses the reaction tRNA(Thr) + L-threonine + ATP = L-threonyl-tRNA(Thr) + AMP + diphosphate + H(+). Functionally, catalyzes the attachment of threonine to tRNA(Thr) in a two-step reaction: L-threonine is first activated by ATP to form Thr-AMP and then transferred to the acceptor end of tRNA(Thr). Also edits incorrectly charged L-seryl-tRNA(Thr). The protein is Threonine--tRNA ligase of Rickettsia rickettsii (strain Sheila Smith).